A 204-amino-acid polypeptide reads, in one-letter code: LexA repressor (204 aa).

The H-T-H motif DNA-binding region spans 28 to 48 (RAEIANRLGFKSANAAEEHLK). Active-site for autocatalytic cleavage activity residues include S121 and K158.

The protein belongs to the peptidase S24 family. Homodimer.

It carries out the reaction Hydrolysis of Ala-|-Gly bond in repressor LexA.. Its function is as follows. Represses a number of genes involved in the response to DNA damage (SOS response), including recA and lexA. In the presence of single-stranded DNA, RecA interacts with LexA causing an autocatalytic cleavage which disrupts the DNA-binding part of LexA, leading to derepression of the SOS regulon and eventually DNA repair. The chain is LexA repressor from Shewanella frigidimarina (strain NCIMB 400).